The following is a 1442-amino-acid chain: Clustered mitochondria protein homolog (1442 aa).

2 disordered regions span residues 38 to 100 (NYRN…KKPD) and 237 to 258 (GRSE…KDRP). A compositionally biased stretch (basic and acidic residues) spans 82 to 100 (SEGEQQKDKTAAEDKKKPD). Positions 394–636 (RAEDTFSSKL…RTFPPDVNFL (243 aa)) constitute a Clu domain. 2 stretches are compositionally biased toward basic and acidic residues: residues 696-714 (QKQE…EPKA) and 737-763 (ESKE…KVET). Disordered regions lie at residues 696-763 (QKQE…KVET) and 949-984 (SESD…SFQC). Residues 949-958 (SESDALTKSG) are compositionally biased toward polar residues. TPR repeat units follow at residues 1087–1120 (AYNF…LNNV), 1213–1246 (ALLD…NIKY), and 1248–1281 (GEKS…EKET). The interval 1373–1442 (RQKEGGTSEQ…SSNASAQQVS (70 aa)) is disordered. Low complexity predominate over residues 1380–1390 (SEQAAAAQASQ). Positions 1424–1442 (ASSSKQADNSSNASAQQVS) are enriched in polar residues.

It belongs to the CLU family.

The protein localises to the cytoplasm. Functionally, mRNA-binding protein involved in proper cytoplasmic distribution of mitochondria. The polypeptide is Clustered mitochondria protein homolog (Aedes aegypti (Yellowfever mosquito)).